We begin with the raw amino-acid sequence, 477 residues long: Protein translocase subunit SecY (477 aa).

Transmembrane regions (helical) follow at residues 28–48 (FMISFLITVVLLVLFRVLAII), 67–89 (FFSLFNLLGGGGLNQLSLFAVGI), 130–150 (IITLPFALVQSFAVIQIATNS), 165–185 (DFVAFYIIAMTAGTYLSVFLG), 196–216 (GITLLILSGILAQLPEGFIAA), 234–254 (AISFFIYFMAFVTLLFATTFI), 286–306 (SAGVIPVIFASSIMSIPVTIA), 329–349 (GIVLYGILVILFSFFYSYIQI), 387–407 (FIGAPFLTVIAIIPYIVSALI), and 413–433 (LSLGGTGIIIIVTAVVEFMSA).

The protein belongs to the SecY/SEC61-alpha family. In terms of assembly, component of the Sec protein translocase complex. Heterotrimer consisting of SecY, SecE and SecG subunits. The heterotrimers can form oligomers, although 1 heterotrimer is thought to be able to translocate proteins. Interacts with the ribosome. Interacts with SecDF, and other proteins may be involved. Interacts with SecA.

Its subcellular location is the cell membrane. The central subunit of the protein translocation channel SecYEG. Consists of two halves formed by TMs 1-5 and 6-10. These two domains form a lateral gate at the front which open onto the bilayer between TMs 2 and 7, and are clamped together by SecE at the back. The channel is closed by both a pore ring composed of hydrophobic SecY resides and a short helix (helix 2A) on the extracellular side of the membrane which forms a plug. The plug probably moves laterally to allow the channel to open. The ring and the pore may move independently. The polypeptide is Protein translocase subunit SecY (Mycoplasma pneumoniae (strain ATCC 29342 / M129 / Subtype 1) (Mycoplasmoides pneumoniae)).